Consider the following 522-residue polypeptide: 56 kDa type-specific antigen (522 aa).

The N-terminal stretch at 1–22 (MKKIMLIASAMSALSLPFSASA) is a signal peptide. The helical transmembrane segment at 67–87 (LTTMLPFGGTLAAGMTIAPGF) threads the bilayer. Residues 385–417 (AQEEGDDQSQVSCNDKKQQAVAEDSKAGSSKEG) form a disordered region. Basic and acidic residues predominate over residues 398 to 417 (NDKKQQAVAEDSKAGSSKEG). Residues 470–490 (IGVVASGVLGVAINVADGVCV) traverse the membrane as a helical segment.

The protein resides in the cell membrane. Its function is as follows. May be an adherent factor for rickettsial adsorption to the host-cell surface and a determinant of virulence of individual rickettsial strain. It is the major outer membrane protein. The chain is 56 kDa type-specific antigen from Orientia tsutsugamushi (Rickettsia tsutsugamushi).